The following is a 322-amino-acid chain: Lipoyl synthase (322 aa).

A compositionally biased stretch (basic and acidic residues) spans M1 to D25. Residues M1–Q29 are disordered. [4Fe-4S] cluster contacts are provided by C61, C66, C72, C87, C91, C94, and S300. The 217-residue stretch at W73–L289 folds into the Radical SAM core domain.

The protein belongs to the radical SAM superfamily. Lipoyl synthase family. [4Fe-4S] cluster is required as a cofactor.

It localises to the cytoplasm. The enzyme catalyses [[Fe-S] cluster scaffold protein carrying a second [4Fe-4S](2+) cluster] + N(6)-octanoyl-L-lysyl-[protein] + 2 oxidized [2Fe-2S]-[ferredoxin] + 2 S-adenosyl-L-methionine + 4 H(+) = [[Fe-S] cluster scaffold protein] + N(6)-[(R)-dihydrolipoyl]-L-lysyl-[protein] + 4 Fe(3+) + 2 hydrogen sulfide + 2 5'-deoxyadenosine + 2 L-methionine + 2 reduced [2Fe-2S]-[ferredoxin]. Its pathway is protein modification; protein lipoylation via endogenous pathway; protein N(6)-(lipoyl)lysine from octanoyl-[acyl-carrier-protein]: step 2/2. Catalyzes the radical-mediated insertion of two sulfur atoms into the C-6 and C-8 positions of the octanoyl moiety bound to the lipoyl domains of lipoate-dependent enzymes, thereby converting the octanoylated domains into lipoylated derivatives. In Gluconobacter oxydans (strain 621H) (Gluconobacter suboxydans), this protein is Lipoyl synthase.